The sequence spans 316 residues: 4-hydroxy-3-methylbut-2-enyl diphosphate reductase (316 aa).

Cys-18 is a [4Fe-4S] cluster binding site. (2E)-4-hydroxy-3-methylbut-2-enyl diphosphate is bound by residues His-47 and His-80. His-47 and His-80 together coordinate dimethylallyl diphosphate. Isopentenyl diphosphate contacts are provided by His-47 and His-80. Cys-102 is a binding site for [4Fe-4S] cluster. His-130 lines the (2E)-4-hydroxy-3-methylbut-2-enyl diphosphate pocket. His-130 is a dimethylallyl diphosphate binding site. Position 130 (His-130) interacts with isopentenyl diphosphate. Glu-132 functions as the Proton donor in the catalytic mechanism. Residue Thr-171 participates in (2E)-4-hydroxy-3-methylbut-2-enyl diphosphate binding. [4Fe-4S] cluster is bound at residue Cys-201. Residues Ser-229, Ser-230, Asn-231, and Ser-274 each coordinate (2E)-4-hydroxy-3-methylbut-2-enyl diphosphate. Dimethylallyl diphosphate contacts are provided by Ser-229, Ser-230, Asn-231, and Ser-274. 4 residues coordinate isopentenyl diphosphate: Ser-229, Ser-230, Asn-231, and Ser-274.

This sequence belongs to the IspH family. [4Fe-4S] cluster serves as cofactor.

The catalysed reaction is isopentenyl diphosphate + 2 oxidized [2Fe-2S]-[ferredoxin] + H2O = (2E)-4-hydroxy-3-methylbut-2-enyl diphosphate + 2 reduced [2Fe-2S]-[ferredoxin] + 2 H(+). It catalyses the reaction dimethylallyl diphosphate + 2 oxidized [2Fe-2S]-[ferredoxin] + H2O = (2E)-4-hydroxy-3-methylbut-2-enyl diphosphate + 2 reduced [2Fe-2S]-[ferredoxin] + 2 H(+). Its pathway is isoprenoid biosynthesis; dimethylallyl diphosphate biosynthesis; dimethylallyl diphosphate from (2E)-4-hydroxy-3-methylbutenyl diphosphate: step 1/1. The protein operates within isoprenoid biosynthesis; isopentenyl diphosphate biosynthesis via DXP pathway; isopentenyl diphosphate from 1-deoxy-D-xylulose 5-phosphate: step 6/6. In terms of biological role, catalyzes the conversion of 1-hydroxy-2-methyl-2-(E)-butenyl 4-diphosphate (HMBPP) into a mixture of isopentenyl diphosphate (IPP) and dimethylallyl diphosphate (DMAPP). Acts in the terminal step of the DOXP/MEP pathway for isoprenoid precursor biosynthesis. This chain is 4-hydroxy-3-methylbut-2-enyl diphosphate reductase, found in Ruegeria sp. (strain TM1040) (Silicibacter sp.).